Reading from the N-terminus, the 249-residue chain is Cilia- and flagella-associated protein 410 (249 aa).

3 LRR repeats span residues 19-40, 41-62, and 63-84; these read NVRK…REMP, SLEV…RSCR, and RLSE…FYLK. An LRRCT domain is found at 97-137; the sequence is NPCCGTSPHLYRMTVLRNLPHLQKLDNQAVTEEELTRALME. The tract at residues 146 to 203 is disordered; that stretch reads HREGAGNGCPKPPYALNSVSSATETSQHLLSYTEETEVQGQTTTDQSPSFSPRDTMRS. Residues 162–175 are compositionally biased toward polar residues; it reads NSVSSATETSQHLL.

As to quaternary structure, found in a complex with CFAP410, NEK1 and SPATA7. Interacts with NEK1. Expressed in the retina.

It is found in the cell projection. Its subcellular location is the cilium. The protein localises to the cytoplasm. It localises to the cytoskeleton. The protein resides in the cilium basal body. It is found in the mitochondrion. Its subcellular location is the photoreceptor outer segment. Functionally, plays a role in cilia formation and/or maintenance. Plays a role in the regulation of cell morphology and cytoskeletal organization. Involved in DNA damage repair. The chain is Cilia- and flagella-associated protein 410 from Mus musculus (Mouse).